A 320-amino-acid chain; its full sequence is Acetyl-coenzyme A carboxylase carboxyl transferase subunit beta (320 aa).

Residues 25-294 (VWTKCDSCGQ…AKDEDELLGE (270 aa)) form the CoA carboxyltransferase N-terminal domain. Positions 29, 32, 48, and 51 each coordinate Zn(2+). The C4-type zinc finger occupies 29–51 (CDSCGQVLYRAELERNLEVCPKC). Residues 295-310 (EMIADDIESSDNEPEI) show a composition bias toward acidic residues. The interval 295-320 (EMIADDIESSDNEPEINIETNKKEDV) is disordered.

It belongs to the AccD/PCCB family. In terms of assembly, acetyl-CoA carboxylase is a heterohexamer composed of biotin carboxyl carrier protein (AccB), biotin carboxylase (AccC) and two subunits each of ACCase subunit alpha (AccA) and ACCase subunit beta (AccD). Zn(2+) serves as cofactor.

Its subcellular location is the cytoplasm. It catalyses the reaction N(6)-carboxybiotinyl-L-lysyl-[protein] + acetyl-CoA = N(6)-biotinyl-L-lysyl-[protein] + malonyl-CoA. It functions in the pathway lipid metabolism; malonyl-CoA biosynthesis; malonyl-CoA from acetyl-CoA: step 1/1. Its function is as follows. Component of the acetyl coenzyme A carboxylase (ACC) complex. Biotin carboxylase (BC) catalyzes the carboxylation of biotin on its carrier protein (BCCP) and then the CO(2) group is transferred by the transcarboxylase to acetyl-CoA to form malonyl-CoA. The sequence is that of Acetyl-coenzyme A carboxylase carboxyl transferase subunit beta from Proteus mirabilis (strain HI4320).